A 281-amino-acid polypeptide reads, in one-letter code: Diaminopimelate epimerase (281 aa).

Substrate is bound by residues N14 and N65. C74 functions as the Proton donor in the catalytic mechanism. Residues 75–76 (GN), N165, N198, and 216–217 (ER) each bind substrate. The active-site Proton acceptor is C225. A substrate-binding site is contributed by 226–227 (GT).

The protein belongs to the diaminopimelate epimerase family. As to quaternary structure, homodimer.

The protein localises to the cytoplasm. It carries out the reaction (2S,6S)-2,6-diaminopimelate = meso-2,6-diaminopimelate. Its pathway is amino-acid biosynthesis; L-lysine biosynthesis via DAP pathway; DL-2,6-diaminopimelate from LL-2,6-diaminopimelate: step 1/1. Its function is as follows. Catalyzes the stereoinversion of LL-2,6-diaminopimelate (L,L-DAP) to meso-diaminopimelate (meso-DAP), a precursor of L-lysine and an essential component of the bacterial peptidoglycan. This chain is Diaminopimelate epimerase, found in Leptospira interrogans serogroup Icterohaemorrhagiae serovar copenhageni (strain Fiocruz L1-130).